The following is a 353-amino-acid chain: Photosystem II D2 protein (353 aa).

The residue at position 2 (Thr-2) is an N-acetylthreonine. Thr-2 carries the post-translational modification Phosphothreonine. The helical transmembrane segment at 41–61 threads the bilayer; that stretch reads CAYFALGGWFTGTTFVTSWYT. His-118 is a chlorophyll a binding site. A helical transmembrane segment spans residues 125-141; sequence GFMLRQFELARSVQLRP. Pheophytin a is bound by residues Gln-130 and Asn-143. Residues 153-166 form a helical membrane-spanning segment; it reads VFVSVFLIYPLGQS. Position 198 (His-198) interacts with chlorophyll a. A helical membrane pass occupies residues 208–228; that stretch reads AALLCAIHGATVENTLFEDGD. Residues His-215 and Phe-262 each coordinate a plastoquinone. His-215 serves as a coordination point for Fe cation. Residue His-269 coordinates Fe cation. The chain crosses the membrane as a helical span at residues 279-295; it reads GLWMSAIGVVGLALNLR.

Belongs to the reaction center PufL/M/PsbA/D family. In terms of assembly, PSII is composed of 1 copy each of membrane proteins PsbA, PsbB, PsbC, PsbD, PsbE, PsbF, PsbH, PsbI, PsbJ, PsbK, PsbL, PsbM, PsbT, PsbX, PsbY, PsbZ, Psb30/Ycf12, at least 3 peripheral proteins of the oxygen-evolving complex and a large number of cofactors. It forms dimeric complexes. The cofactor is The D1/D2 heterodimer binds P680, chlorophylls that are the primary electron donor of PSII, and subsequent electron acceptors. It shares a non-heme iron and each subunit binds pheophytin, quinone, additional chlorophylls, carotenoids and lipids. There is also a Cl(-1) ion associated with D1 and D2, which is required for oxygen evolution. The PSII complex binds additional chlorophylls, carotenoids and specific lipids..

It localises to the plastid. Its subcellular location is the chloroplast thylakoid membrane. The enzyme catalyses 2 a plastoquinone + 4 hnu + 2 H2O = 2 a plastoquinol + O2. In terms of biological role, photosystem II (PSII) is a light-driven water:plastoquinone oxidoreductase that uses light energy to abstract electrons from H(2)O, generating O(2) and a proton gradient subsequently used for ATP formation. It consists of a core antenna complex that captures photons, and an electron transfer chain that converts photonic excitation into a charge separation. The D1/D2 (PsbA/PsbD) reaction center heterodimer binds P680, the primary electron donor of PSII as well as several subsequent electron acceptors. D2 is needed for assembly of a stable PSII complex. The protein is Photosystem II D2 protein of Pinus thunbergii (Japanese black pine).